A 356-amino-acid chain; its full sequence is Tyrosine recombinase XerS (356 aa).

Residues 16 to 121 (LMPWYVLEYY…ALSSLYKYLT (106 aa)) form the Core-binding (CB) domain. The region spanning 169 to 354 (GFLTYIDQEH…VNDEQKNALD (186 aa)) is the Tyr recombinase domain. Residues R210, K234, H306, R309, and H332 contribute to the active site. Residue Y341 is the O-(3'-phospho-DNA)-tyrosine intermediate of the active site.

Belongs to the 'phage' integrase family. XerS subfamily.

It localises to the cytoplasm. With respect to regulation, ftsK is required for recombination. Its function is as follows. Site-specific tyrosine recombinase, which acts by catalyzing the cutting and rejoining of the recombining DNA molecules. Essential to convert dimers of the bacterial chromosome into monomers to permit their segregation at cell division. In Streptococcus pneumoniae serotype 2 (strain D39 / NCTC 7466), this protein is Tyrosine recombinase XerS.